The chain runs to 224 residues: DNA mismatch repair protein MutH (224 aa).

This sequence belongs to the MutH family.

It is found in the cytoplasm. In terms of biological role, sequence-specific endonuclease that cleaves unmethylated GATC sequences. It is involved in DNA mismatch repair. The protein is DNA mismatch repair protein MutH of Histophilus somni (strain 129Pt) (Haemophilus somnus).